The chain runs to 146 residues: Large ribosomal subunit protein uL11 (146 aa).

The protein belongs to the universal ribosomal protein uL11 family. In terms of assembly, part of the ribosomal stalk of the 50S ribosomal subunit. Interacts with L10 and the large rRNA to form the base of the stalk. L10 forms an elongated spine to which L12 dimers bind in a sequential fashion forming a multimeric L10(L12)X complex. One or more lysine residues are methylated.

Functionally, forms part of the ribosomal stalk which helps the ribosome interact with GTP-bound translation factors. This Corynebacterium jeikeium (strain K411) protein is Large ribosomal subunit protein uL11.